A 103-amino-acid chain; its full sequence is uncharacterized protein (103 aa).

Positions 10–63 (FPECDHLKQIYDKCFTEFFQKFITPNYRHQYAVNPCERLHDVYKRCVEERLATQ) constitute a CHCH domain. 2 short sequence motifs (cx9C motif) span residues 13–23 (CDHLKQIYDKC) and 45–55 (CERLHDVYKRC). 2 disulfides stabilise this stretch: C13–C55 and C23–C45. Residues 80–90 (TDDDKLKDRQN) show a composition bias toward basic and acidic residues. The interval 80-103 (TDDDKLKDRQNNQKTNSENKCSSS) is disordered. Polar residues predominate over residues 91-103 (NQKTNSENKCSSS).

It belongs to the TRIAP1/MDM35 family.

This is an uncharacterized protein from Caenorhabditis elegans.